Here is a 183-residue protein sequence, read N- to C-terminus: Ribosome rescue factor SmrB (183 aa).

The Smr domain occupies 98-173 (LDLHGLTQKQ…GDAALLVLIE (76 aa)).

Belongs to the SmrB family. As to quaternary structure, associates with collided ribosomes, but not with correctly translating polysomes.

In terms of biological role, acts as a ribosome collision sensor. Detects stalled/collided disomes (pairs of ribosomes where the leading ribosome is stalled and a second ribosome has collided with it) and endonucleolytically cleaves mRNA at the 5' boundary of the stalled ribosome. Stalled/collided disomes form a new interface (primarily via the 30S subunits) that binds SmrB. Cleaved mRNA becomes available for tmRNA ligation, leading to ribosomal subunit dissociation and rescue of stalled ribosomes. This is Ribosome rescue factor SmrB from Erwinia tasmaniensis (strain DSM 17950 / CFBP 7177 / CIP 109463 / NCPPB 4357 / Et1/99).